We begin with the raw amino-acid sequence, 1493 residues long: Protein Shroom4 (1493 aa).

The 83-residue stretch at 10-92 folds into the PDZ domain; sequence YVPVQLQGGA…ILKLIVRRRN (83 aa). The tract at residues 202–282 is disordered; the sequence is CALSLRPEEP…PPQPPVRRDS (81 aa). 2 stretches are compositionally biased toward polar residues: residues 234–243 and 249–262; these read AETSGGSRRT and TPSS…QEGY. S411 carries the phosphoserine modification. Positions 430 to 695 are disordered; sequence GSKGMELPPV…SPGQRPGQSS (266 aa). Basic and acidic residues-rich tracts occupy residues 470–484 and 498–509; these read QSSK…DDRS and GEADGHPSEKGF. Over residues 513 to 547 the composition is skewed to polar residues; that stretch reads NRTSRAASELANQQPSASGSLVQQATDCSSTTKAA. S729 is subject to Phosphoserine. Disordered stretches follow at residues 740-759 and 781-813; these read AAME…ASTA and SKSL…NFQP. Residues 782 to 802 are compositionally biased toward polar residues; that stretch reads KSLSTSHLPGLTTHSNKTFTQ. S1019 is subject to Phosphoserine. Disordered regions lie at residues 1117–1170, 1187–1206, 1214–1236, and 1246–1265; these read AAQQ…ETSG, SFGH…AEQE, DFLP…PCYY, and GQEA…PPSG. A compositionally biased stretch (low complexity) spans 1118-1129; sequence AQQQKQQQQQQK. Acidic residues predominate over residues 1132 to 1159; that stretch reads EEEEEEEEEEEEEEEEEEEEAEEEEEEL. Positions 1213 to 1492 constitute an ASD2 domain; the sequence is SDFLPPIRGH…RESLLLGPSN (280 aa). A coiled-coil region spans residues 1382–1488; it reads LSGRLARVEN…LKCLRESLLL (107 aa).

The protein belongs to the shroom family. In terms of assembly, interacts directly with F-actin. In terms of tissue distribution, expressed in all fetal and adult tissues investigated. Expressed in adult heart, brain, placenta, lung, liver, skeletal muscle, kidney and pancreas. In brain regions detected in cerebellum, cerebral cortex, medulla, spinal cord, occipital pole, frontal lobe, temporal lobe and putamen. The expression is strongest in the medulla and weakest in the cerebral cortex.

It is found in the cytoplasm. Its subcellular location is the cytoskeleton. Its function is as follows. Probable regulator of cytoskeletal architecture that plays an important role in development. May regulate cellular and cytoskeletal architecture by modulating the spatial distribution of myosin II. The polypeptide is Protein Shroom4 (SHROOM4) (Homo sapiens (Human)).